We begin with the raw amino-acid sequence, 344 residues long: Ferrochelatase (344 aa).

The Fe cation site is built by H196 and E277.

Belongs to the ferrochelatase family.

It is found in the cytoplasm. It catalyses the reaction heme b + 2 H(+) = protoporphyrin IX + Fe(2+). Its pathway is porphyrin-containing compound metabolism; protoheme biosynthesis; protoheme from protoporphyrin-IX: step 1/1. Catalyzes the ferrous insertion into protoporphyrin IX. The protein is Ferrochelatase of Synechococcus sp. (strain JA-2-3B'a(2-13)) (Cyanobacteria bacterium Yellowstone B-Prime).